Consider the following 268-residue polypeptide: MKKLHREICGPVGLVPTMGYLHEGHLSLVRASKKQDINTVASIFVNPTQFGPHEDFKKYPRDEKRDMAMLENTGVDYVFVPSVEDMYPAGFDSWVEPGILQQCLEGAVRPGHFRGVCTVVAKLFTIIRPDRAYFGQKDYQQYLIIKRMASDLNLDVSVEMLPIIRENDGLALSSRNTYLSPAERQAALVLYRSLLTARSLFDEKEHRAEVIRKKMTDVIQHESMAEIDYVSLSHQDTLCESDEVSAKTIALVAARFGKTRLIDNMFLA.

18–25 (MGYLHEGH) serves as a coordination point for ATP. His25 serves as the catalytic Proton donor. Gln49 contacts (R)-pantoate. Beta-alanine is bound at residue Gln49. ATP is bound at residue 135–138 (GQKD). Gln141 contacts (R)-pantoate. Residues Ile164 and 172–175 (LSSR) contribute to the ATP site.

The protein belongs to the pantothenate synthetase family. Homodimer.

It is found in the cytoplasm. It catalyses the reaction (R)-pantoate + beta-alanine + ATP = (R)-pantothenate + AMP + diphosphate + H(+). Its pathway is cofactor biosynthesis; (R)-pantothenate biosynthesis; (R)-pantothenate from (R)-pantoate and beta-alanine: step 1/1. Functionally, catalyzes the condensation of pantoate with beta-alanine in an ATP-dependent reaction via a pantoyl-adenylate intermediate. This chain is Pantothenate synthetase, found in Dehalococcoides mccartyi (strain CBDB1).